Reading from the N-terminus, the 310-residue chain is Bacteriochlorophyll synthase 34 kDa chain (310 aa).

Positions 1 to 13 (MSDMSDQTRLSSP) are enriched in polar residues. Residues 1–20 (MSDMSDQTRLSSPPSLPLHK) form a disordered region. The next 8 membrane-spanning stretches (helical) occupy residues 39–59 (VTWF…GALG), 67–87 (LLLG…VVND), 112–132 (HVYI…LFLG), 134–154 (QVAF…LRPI), 166–186 (LVAI…FAPL), 187–207 (TGES…IMTV), 248–268 (VIGL…AILL), and 287–307 (VFFN…AAIG).

The protein localises to the cell membrane. Its pathway is porphyrin-containing compound metabolism; bacteriochlorophyll biosynthesis (light-independent). Its function is as follows. Catalyzes the esterification of bacteriochlorophyllide a by geranylgeraniol-PPi. This is Bacteriochlorophyll synthase 34 kDa chain (bchG) from Chloroflexus aurantiacus (strain ATCC 29366 / DSM 635 / J-10-fl).